The primary structure comprises 186 residues: Type 1 phosphatases regulator ypi-1 (186 aa).

The segment covering 1–32 (MTSVAQRQAQPAQPSTSQTAAPTRTQTETSSP) has biased composition (polar residues). The tract at residues 1 to 186 (MTSVAQRQAQ…SETQGPGGSK (186 aa)) is disordered. Residues 82 to 94 (DSSSSSDSSSSSD) are compositionally biased toward low complexity. A compositionally biased stretch (basic and acidic residues) spans 122-137 (HDHDHDGREGGCNHDH). The segment covering 138–151 (GRGRKHGNKGKKTE) has biased composition (basic residues).

The protein belongs to the YPI1 family.

It localises to the nucleus. Its function is as follows. Regulator of type 1 phosphatases which maintains protein phosphatase activity under strict control. This chain is Type 1 phosphatases regulator ypi-1 (ypi-1), found in Neurospora crassa (strain ATCC 24698 / 74-OR23-1A / CBS 708.71 / DSM 1257 / FGSC 987).